The chain runs to 424 residues: MDKLRMTGGTPLNGEVTIAGAKNAALPILCACLLTDQPVVLRNLPDLQDVRTMLKLLQEIGVVVSFPDANNPNHVILNAAVIKSSEATYEMVKTMRASILVLGPLLARMHSAKVSLPGGCAIGARPVDQHIKGLKAMGASIKIKSGYIQAETKPTTERLKGASILTDMITVTGTENLLMAATLASGTTILENAAREPEVGDLAELLVKMGAKITGIGSDRLVIEGVEKLHGAEHSVIPDRIEAGTFLCAVAAAGGEVLVKHCRPDTLDAVIVKLKEAGLKMEIGPDWIKASMQGRPKAVSFRTSEYPAFPTDMQAQLMAVNAVANGNSTITETIFENRFMHVQELNRLGADIAIEGNTAIAQGVERLSGAIVMATDLRASASLVIAGLAAQGETQVDRIYHLDRGYDRMEQKLTRLGANIERIK.

Residue 22-23 (KN) coordinates phosphoenolpyruvate. R96 is a UDP-N-acetyl-alpha-D-glucosamine binding site. C120 serves as the catalytic Proton donor. A 2-(S-cysteinyl)pyruvic acid O-phosphothioketal modification is found at C120. UDP-N-acetyl-alpha-D-glucosamine contacts are provided by residues 125–129 (RPVDQ), D312, and I334.

This sequence belongs to the EPSP synthase family. MurA subfamily.

The protein localises to the cytoplasm. It catalyses the reaction phosphoenolpyruvate + UDP-N-acetyl-alpha-D-glucosamine = UDP-N-acetyl-3-O-(1-carboxyvinyl)-alpha-D-glucosamine + phosphate. The protein operates within cell wall biogenesis; peptidoglycan biosynthesis. Its function is as follows. Cell wall formation. Adds enolpyruvyl to UDP-N-acetylglucosamine. The chain is UDP-N-acetylglucosamine 1-carboxyvinyltransferase from Polynucleobacter asymbioticus (strain DSM 18221 / CIP 109841 / QLW-P1DMWA-1) (Polynucleobacter necessarius subsp. asymbioticus).